The following is a 746-amino-acid chain: Lysine-specific histone demethylase 1 homolog 2 (746 aa).

A disordered region spans residues 1 to 26; that stretch reads MNSPASDETAPRRNRRKVSRKNYDEN. Positions 51-152 constitute an SWIRM domain; it reads EKETETEALI…FGVSPLFAPY (102 aa). Residues glutamate 189, arginine 191, arginine 197, and glutamate 569 each coordinate FAD.

The protein belongs to the flavin monoamine oxidase family. FAD is required as a cofactor. As to expression, expressed in the shoot and root apical regions of young seedlings. Expressed in inflorescences.

Functionally, probable histone demethylase that reduces the levels of histone H3 'Lys-4' methylation in chromatin of the floral repressor FLOWERING LOCUS C (FLC) and the sporophytically silenced floral repressor FWA. Seems to act in partial redundancy with FLOWERING LOCUS D (FLD) to repress FLC expression. Required for cytosine methylation of FWA. Controls primary seed dormancy by regulating DOG1 and abscisic acid signaling-related genes. The polypeptide is Lysine-specific histone demethylase 1 homolog 2 (Arabidopsis thaliana (Mouse-ear cress)).